Reading from the N-terminus, the 121-residue chain is Small ribosomal subunit protein uS13 (121 aa).

The segment at 98–121 (RGQKTRNNAHTVKGKPKSIAGKKK) is disordered. Over residues 109 to 121 (VKGKPKSIAGKKK) the composition is skewed to basic residues.

The protein belongs to the universal ribosomal protein uS13 family. In terms of assembly, part of the 30S ribosomal subunit. Forms a loose heterodimer with protein S19. Forms two bridges to the 50S subunit in the 70S ribosome.

Its function is as follows. Located at the top of the head of the 30S subunit, it contacts several helices of the 16S rRNA. In the 70S ribosome it contacts the 23S rRNA (bridge B1a) and protein L5 of the 50S subunit (bridge B1b), connecting the 2 subunits; these bridges are implicated in subunit movement. Contacts the tRNAs in the A and P-sites. The chain is Small ribosomal subunit protein uS13 from Phytoplasma australiense.